The following is a 375-amino-acid chain: tRNA-specific 2-thiouridylase MnmA (375 aa).

ATP is bound by residues 12-19 (GMSGGVDS) and methionine 38. The interval 98-100 (NPD) is interaction with target base in tRNA. The active-site Nucleophile is the cysteine 103. Cysteine 103 and cysteine 200 form a disulfide bridge. Glycine 127 contributes to the ATP binding site. Positions 150 to 152 (KDQ) are interaction with tRNA. Catalysis depends on cysteine 200, which acts as the Cysteine persulfide intermediate. The tract at residues 312 to 313 (RY) is interaction with tRNA.

The protein belongs to the MnmA/TRMU family.

The protein localises to the cytoplasm. The enzyme catalyses S-sulfanyl-L-cysteinyl-[protein] + uridine(34) in tRNA + AH2 + ATP = 2-thiouridine(34) in tRNA + L-cysteinyl-[protein] + A + AMP + diphosphate + H(+). Functionally, catalyzes the 2-thiolation of uridine at the wobble position (U34) of tRNA, leading to the formation of s(2)U34. The sequence is that of tRNA-specific 2-thiouridylase MnmA from Ligilactobacillus salivarius (strain UCC118) (Lactobacillus salivarius).